Reading from the N-terminus, the 315-residue chain is High mobility group protein hmg-12 (315 aa).

Residues valine 57–aspartate 315 are disordered. Positions alanine 77–aspartate 86 are enriched in polar residues. The segment at residues proline 118–lysine 128 is a DNA-binding region (a.T hook 1). Composition is skewed to low complexity over residues alanine 147–alanine 160 and alanine 196–alanine 205.

It belongs to the HMGA family.

The protein resides in the nucleus. Transcriptional regulator. Binds to specific sequence motifs in regulatory elements. May recruit transcription factors, or may induce structural changes in chromatin, to thereby modulate embryonic expression of ATP-dependent chaperone cdc-48.1. In Caenorhabditis elegans, this protein is High mobility group protein hmg-12.